A 296-amino-acid polypeptide reads, in one-letter code: NAD kinase (296 aa).

Catalysis depends on Asp73, which acts as the Proton acceptor. NAD(+)-binding positions include 73–74, Lys78, 151–152, Arg178, Asp180, and 191–196; these read DG, NE, and TAHAMS.

Belongs to the NAD kinase family. A divalent metal cation serves as cofactor.

Its subcellular location is the cytoplasm. The enzyme catalyses NAD(+) + ATP = ADP + NADP(+) + H(+). Its function is as follows. Involved in the regulation of the intracellular balance of NAD and NADP, and is a key enzyme in the biosynthesis of NADP. Catalyzes specifically the phosphorylation on 2'-hydroxyl of the adenosine moiety of NAD to yield NADP. The polypeptide is NAD kinase (Francisella tularensis subsp. holarctica (strain FTNF002-00 / FTA)).